A 64-amino-acid polypeptide reads, in one-letter code: Outer envelope membrane protein 7 (64 aa).

Over 1-11 (MGKTSGAKQAT) the chain is Chloroplast intermembrane. Residues 12 to 32 (VVVAAMALGWLAIEIAFKPFL) form a helical membrane-spanning segment. An AKR2A-binding sequence (ABS) required for chloroplast outer envelope membrane targeting motif is present at residues 29–35 (KPFLDKF). The Cytoplasmic segment spans residues 33 to 64 (DKFRSSIDKSDPTKDPDDFDTAATATTSKEGL). The segment covering 39–48 (IDKSDPTKDP) has biased composition (basic and acidic residues). Residues 39 to 64 (IDKSDPTKDPDDFDTAATATTSKEGL) are disordered. Positions 53-64 (TAATATTSKEGL) are enriched in low complexity.

In terms of assembly, interacts with AKR2A. Confined to green tissues.

It is found in the plastid. The protein localises to the chloroplast outer membrane. This Arabidopsis thaliana (Mouse-ear cress) protein is Outer envelope membrane protein 7.